A 486-amino-acid chain; its full sequence is Maintenance of mitochondrial morphology protein 1 (486 aa).

At Met-1–Gly-19 the chain is on the lumenal side. The helical transmembrane segment at Leu-20–Phe-40 threads the bilayer. Residues Gly-41–Thr-486 are Cytoplasmic-facing. 4 disordered regions span residues Pro-45–Leu-98, Gln-269–Thr-318, Val-393–Thr-412, and Ala-420–Thr-486. The segment covering Gln-51–Ser-61 has biased composition (basic residues). Over residues Leu-70–Pro-79 the composition is skewed to basic and acidic residues. 4 stretches are compositionally biased toward polar residues: residues Ser-80–Ser-96, Gln-269–Ser-291, Glu-307–Thr-318, and Glu-401–Thr-412. The region spanning Gln-125 to Pro-382 is the SMP-LTD domain. Basic and acidic residues-rich tracts occupy residues His-429–Arg-440 and Asp-462–Phe-473.

This sequence belongs to the MMM1 family. In terms of assembly, homodimer. Component of the ER-mitochondria encounter structure (ERMES) or MDM complex, composed of MMM1, MDM10, MDM12 and MDM34. An MMM1 homodimer associates with one molecule of MDM12 on each side in a pairwise head-to-tail manner, and the SMP-LTD domains of MMM1 and MDM12 generate a continuous hydrophobic tunnel for phospholipid trafficking.

Its subcellular location is the endoplasmic reticulum membrane. Its function is as follows. Component of the ERMES/MDM complex, which serves as a molecular tether to connect the endoplasmic reticulum (ER) and mitochondria. Components of this complex are involved in the control of mitochondrial shape and protein biogenesis, and function in nonvesicular lipid trafficking between the ER and mitochondria. The MDM12-MMM1 subcomplex functions in the major beta-barrel assembly pathway that is responsible for biogenesis of all outer membrane beta-barrel proteins, and acts in a late step after the SAM complex. The MDM10-MDM12-MMM1 subcomplex further acts in the TOM40-specific pathway after the action of the MDM12-MMM1 complex. Essential for establishing and maintaining the structure of mitochondria and maintenance of mtDNA nucleoids. This chain is Maintenance of mitochondrial morphology protein 1, found in Coccidioides immitis (strain RS) (Valley fever fungus).